The following is a 63-amino-acid chain: Large ribosomal subunit protein bL28 (63 aa).

It belongs to the bacterial ribosomal protein bL28 family.

The polypeptide is Large ribosomal subunit protein bL28 (Treponema denticola (strain ATCC 35405 / DSM 14222 / CIP 103919 / JCM 8153 / KCTC 15104)).